The sequence spans 202 residues: Protein lin-28 homolog A (202 aa).

The disordered stretch occupies residues 1–31 (MGSVSNQQFAGAKPGEEPSGDSPKAENESQP). In terms of domain architecture, CSD spans 33-106 (HGSGICKWFN…GLESIRVTGP (74 aa)). A flexible linker region spans residues 107-130 (GGVFCIGSERRPKSKSLQKRRSKG). 2 consecutive CCHC-type zinc fingers follow at residues 131–148 (DRCY…ECKL) and 153–170 (KKCH…NCPA). Residues Cys133, Cys136, His141, Cys146, Cys155, Cys158, His163, and Cys168 each contribute to the Zn(2+) site. The segment at 169–202 (PAKAQQSPSSQGKPAYFREKEDMHSSALLPETRE) is disordered.

The protein belongs to the lin-28 family. Monomer.

It localises to the cytoplasm. The protein localises to the rough endoplasmic reticulum. Its subcellular location is the P-body. The protein resides in the stress granule. It is found in the nucleus. It localises to the nucleolus. Its function is as follows. RNA-binding protein that inhibits processing of pre-let-7 miRNAs and regulates translation of mRNAs that control developmental timing, pluripotency and metabolism. Seems to recognize a common structural G-quartet (G4) feature in its miRNA and mRNA targets. 'Translational enhancer' that drives specific mRNAs to polysomes and increases the efficiency of protein synthesis. Its association with the translational machinery and target mRNAs results in an increased number of initiation events per molecule of mRNA and, indirectly, in mRNA stabilization. Suppressor of microRNA (miRNA) biogenesis, including that of let-7. Binds specific target miRNA precursors (pre-miRNAs), recognizing an 5'-GGAG-3' motif found in their terminal loop, and recruits uridylyltransferase. This results in the terminal uridylation of target pre-miRNAs. Uridylated pre-miRNAs fail to be processed by Dicer and undergo degradation. Localized to the periendoplasmic reticulum area, binds to a large number of spliced mRNAs and inhibits the translation of mRNAs destined for the ER, reducing the synthesis of transmembrane proteins, ER or Golgi lumen proteins, and secretory proteins. Binds to and enhances the translation of mRNAs for several metabolic enzymes, increasing glycolysis and oxidative phosphorylation. Which, with the let-7 repression may enhance tissue repair in adult tissue. This chain is Protein lin-28 homolog A (LIN28A), found in Gallus gallus (Chicken).